The chain runs to 212 residues: Ras-related protein Rab-2A (212 aa).

Ala2 carries the N-acetylalanine modification. The interval 2–19 (AYAYLFKYIIIGDTGVGK) is required for interaction with PRKCI. Gly16, Val17, Gly18, Lys19, Ser20, Cys21, and Thr38 together coordinate GTP. Position 20 (Ser20) interacts with Mg(2+). The Switch 1 signature appears at 37–42 (LTIGVE). The Mg(2+) site is built by Thr38 and Asp61. Residues 63 to 72 (AGQESFRSIT) carry the Switch 2 motif. Residues Gly64, Asn119, Lys120, Asp122, Ala150, and Lys151 each coordinate GTP. S-geranylgeranyl cysteine attachment occurs at residues Cys211 and Cys212.

The protein belongs to the small GTPase superfamily. Rab family. Interacts with PRKCI. Interacts with TRIP11. Interacts (in GTP-bound form) with GARIN1B. Interacts (GTP-bound) with HOPS complex component VPS39; interaction contributes to obtaining a functional HOPS complex that promotes autophagosome-lysosome membrane fusion driven by STX17-SNAP29-VAMP8. May interact with VPS41. Requires Mg(2+) as cofactor. Prenylated. Prenylation is required for association with cellular membranes.

It is found in the endoplasmic reticulum-Golgi intermediate compartment membrane. The protein resides in the melanosome. It localises to the endoplasmic reticulum membrane. Its subcellular location is the golgi apparatus membrane. The protein localises to the cytoplasmic vesicle. It is found in the secretory vesicle. The protein resides in the acrosome. It localises to the autophagosome membrane. The catalysed reaction is GTP + H2O = GDP + phosphate + H(+). Its activity is regulated as follows. Regulated by guanine nucleotide exchange factors (GEFs) which promote the exchange of bound GDP for free GTP, GTPase activating proteins (GAPs) which increase the GTP hydrolysis activity, and GDP dissociation inhibitors (GDIs) which inhibit the dissociation of the nucleotide from the GTPase. Functionally, the small GTPases Rab are key regulators of intracellular membrane trafficking, from the formation of transport vesicles to their fusion with membranes. Rabs cycle between active GTP-bound and inactive GDP-bound states. In their active state, drive transport of vesicular carriers from donor organelles to acceptor organelles to regulate the membrane traffic that maintains organelle identity and morphology. RAB2A regulates autophagy by promoting autophagosome-lysosome fusion via recruitment of the HOPS endosomal tethering complex; this process involves autophagosomal RAB2A and lysosomal RAB39A recruitment of HOPS subcomplexes VPS39-VPS11 and VPS41-VPS16-VPS18-VPS33A, respectively, which assemble into a functional complex to mediate membrane tethering and SNAREs-driven membrane fusion. Required for protein transport from the endoplasmic reticulum to the Golgi complex. Regulates the compacted morphology of the Golgi. Together with RAB2B, redundantly required for efficient autophagic flux. This Canis lupus familiaris (Dog) protein is Ras-related protein Rab-2A (RAB2A).